A 521-amino-acid polypeptide reads, in one-letter code: Phomenoic acid biosynthesis cluster-specific transcriptional regulator (521 aa).

The segment at residues His-46 to Gly-76 is a DNA-binding region (zn(2)-C6 fungal-type).

Its subcellular location is the nucleus. Functionally, transcriptional regulator; part of the gene cluster that mediates the biosynthesis of phomenoic acid, a long chain aliphatic carboxylic acid that does not appear to be essential for pathogenicity but may play a role in allowing to outcompete other fungi in the environmental niche via its antifungal properties. Positively regulates the expression of the cluster and subsequent production of phomenoic acid. This chain is Phomenoic acid biosynthesis cluster-specific transcriptional regulator, found in Leptosphaeria maculans (strain JN3 / isolate v23.1.3 / race Av1-4-5-6-7-8) (Blackleg fungus).